The primary structure comprises 614 residues: UvrABC system protein C (614 aa).

The region spanning 14–91 (TSPGCYIHKD…IKENKPKYNI (78 aa)) is the GIY-YIG domain. A UVR domain is found at 196-231 (DKIIDDLKSKMAVAAQSMEFERAAEYRDLIQAIGTL). A disordered region spans residues 595-614 (LPQVAEERVDYQTEGNHNEP). Over residues 599-614 (AEERVDYQTEGNHNEP) the composition is skewed to basic and acidic residues.

It belongs to the UvrC family. In terms of assembly, interacts with UvrB in an incision complex.

It is found in the cytoplasm. In terms of biological role, the UvrABC repair system catalyzes the recognition and processing of DNA lesions. UvrC both incises the 5' and 3' sides of the lesion. The N-terminal half is responsible for the 3' incision and the C-terminal half is responsible for the 5' incision. This is UvrABC system protein C from Streptococcus pneumoniae serotype 4 (strain ATCC BAA-334 / TIGR4).